The sequence spans 323 residues: Probable cell division protein WhiA (323 aa).

The segment at residues 279 to 313 (TLKELGEMVSGGKISKSGINHRLRKLDEIAERLRA) is a DNA-binding region (H-T-H motif).

This sequence belongs to the WhiA family.

Functionally, involved in cell division and chromosome segregation. The polypeptide is Probable cell division protein WhiA (Anoxybacillus flavithermus (strain DSM 21510 / WK1)).